A 513-amino-acid polypeptide reads, in one-letter code: Dye-decolorizing peroxidase msp1 (513 aa).

Residues 1-20 form the signal peptide; sequence MKLFSASVFAAIIASHYASA. Residues 21–55 constitute a propeptide that is removed on maturation; it reads TAHIRAPNVKPRRTNSLLTAPPQQPPLPSAQQAAS. Positions 33-52 are disordered; the sequence is RTNSLLTAPPQQPPLPSAQQ. D228 serves as the catalytic Proton acceptor. H365 lines the heme pocket.

In terms of assembly, homodimer. Heme b is required as a cofactor.

The protein localises to the secreted. It carries out the reaction Reactive Blue 5 + 2 H2O2 = 2,2'-disulfonyl azobenzene + 3-[(4-amino-6-chloro-1,3,5-triazin-2-yl)amino]benzenesulfonate + phthalate + 2 H2O + 2 H(+). The catalysed reaction is 2 a phenolic donor + H2O2 = 2 a phenolic radical donor + 2 H2O. In terms of biological role, manganese-independent peroxidase that is able to convert a large number of compounds, but its physiological substrate is not known. In addition to classic peroxidase substrates (e.g. 2,6-dimethoxyphenol), oxidizes dyes such as Reactive Blue 5. Also degrades beta-carotene. The chain is Dye-decolorizing peroxidase msp1 from Mycetinis scorodonius (Garlic mushroom).